The sequence spans 309 residues: Branched-chain-amino-acid aminotransferase (309 aa).

Lys-160 carries the post-translational modification N6-(pyridoxal phosphate)lysine.

Belongs to the class-IV pyridoxal-phosphate-dependent aminotransferase family. As to quaternary structure, homohexamer. Requires pyridoxal 5'-phosphate as cofactor.

It catalyses the reaction L-leucine + 2-oxoglutarate = 4-methyl-2-oxopentanoate + L-glutamate. The catalysed reaction is L-isoleucine + 2-oxoglutarate = (S)-3-methyl-2-oxopentanoate + L-glutamate. It carries out the reaction L-valine + 2-oxoglutarate = 3-methyl-2-oxobutanoate + L-glutamate. It functions in the pathway amino-acid biosynthesis; L-isoleucine biosynthesis; L-isoleucine from 2-oxobutanoate: step 4/4. The protein operates within amino-acid biosynthesis; L-leucine biosynthesis; L-leucine from 3-methyl-2-oxobutanoate: step 4/4. Its pathway is amino-acid biosynthesis; L-valine biosynthesis; L-valine from pyruvate: step 4/4. Its function is as follows. Acts on leucine, isoleucine and valine. The protein is Branched-chain-amino-acid aminotransferase (ilvE) of Salmonella typhi.